A 212-amino-acid polypeptide reads, in one-letter code: MLFFIDTANIDEIKEAYELGVLAGVTTNPSLVAKEADVSFHDRLREITEVVSGSVSAEVISLNAEEMIEEGKELAKIAPNITVKIPMTSEGLKAVKALSDLNIKTNVTLIFSANQALLAARAGATYVSPFLGRLDDIGHNGLELISEIRQIFDIHDIDTQIIAASIRHAQHVTEAALRGAHIGTMPLKVIHQLAKHPLTDKGIEQFLADWNK.

The Schiff-base intermediate with substrate role is filled by K84.

Belongs to the transaldolase family. Type 3B subfamily.

The protein localises to the cytoplasm. It carries out the reaction D-sedoheptulose 7-phosphate + D-glyceraldehyde 3-phosphate = D-erythrose 4-phosphate + beta-D-fructose 6-phosphate. Its pathway is carbohydrate degradation; pentose phosphate pathway; D-glyceraldehyde 3-phosphate and beta-D-fructose 6-phosphate from D-ribose 5-phosphate and D-xylulose 5-phosphate (non-oxidative stage): step 2/3. Transaldolase is important for the balance of metabolites in the pentose-phosphate pathway. The sequence is that of Probable transaldolase from Bacillus velezensis (strain DSM 23117 / BGSC 10A6 / LMG 26770 / FZB42) (Bacillus amyloliquefaciens subsp. plantarum).